Consider the following 464-residue polypeptide: MRLWGGRFAGGPAEALARLSISVQFDWRLAPYDLLASKSHARVLHRAGLLDADELAAMLAALDELSDAVAQGRFRPTVEDEDVHTALERGLLERLGTLGGKLRAGRSRNDQVATDLRLYLRDSAREVAARLTELSHALVVLAEQHVDTPAPGMTHLQHAQPISFGHQLLAHVQAFVRDIDRLRDWDVRASVSALGAGALAGSSLPLDPQGVAAELGFDRAFANSLDAVSDRDFAAEFLFVAALIGVHLSRLGEEIVLWTTREFGWVELDDAFATGSSIMPQKKNPDVAELARGKSGRLIGDLTGFLATLKGLPLAYDRDLQEDKEPVFDAVDTLLLVLPALTGTVATMRVRRERLVAAAPDGFALATDVAEYLVRRGVPFRQAHEAVGQFVSWCVAHDVDLDEVSDDDLGMINPLLTPDVREVLSVRGALEARSAPGGTAPDRVREQIAALRPVLDRDQAWAVG.

Belongs to the lyase 1 family. Argininosuccinate lyase subfamily.

The protein localises to the cytoplasm. The catalysed reaction is 2-(N(omega)-L-arginino)succinate = fumarate + L-arginine. It functions in the pathway amino-acid biosynthesis; L-arginine biosynthesis; L-arginine from L-ornithine and carbamoyl phosphate: step 3/3. The chain is Argininosuccinate lyase from Frankia casuarinae (strain DSM 45818 / CECT 9043 / HFP020203 / CcI3).